The following is a 301-amino-acid chain: Cell division control protein 2 homolog 1 (301 aa).

Residues 5–297 (YERLQKIGEG…AAQALEHPYF (293 aa)) enclose the Protein kinase domain. ATP is bound by residues 11 to 19 (IGEGSYGVV) and Lys34. Ser15 carries the phosphoserine modification. Position 16 is a phosphotyrosine (Tyr16). Catalysis depends on Asp127, which acts as the Proton acceptor. Thr160 is subject to Phosphothreonine; by CAK.

Belongs to the protein kinase superfamily. CMGC Ser/Thr protein kinase family. CDC2/CDKX subfamily. As to quaternary structure, forms a stable but non-covalent complex with a regulatory subunit and with a cyclin.

It carries out the reaction L-seryl-[protein] + ATP = O-phospho-L-seryl-[protein] + ADP + H(+). The catalysed reaction is L-threonyl-[protein] + ATP = O-phospho-L-threonyl-[protein] + ADP + H(+). Phosphorylation at Ser-15 or Tyr-16 inactivates the enzyme, while phosphorylation at Thr-160 activates it. In terms of biological role, probably involved in the control of the cell cycle. The chain is Cell division control protein 2 homolog 1 (CRK1) from Trypanosoma brucei brucei.